We begin with the raw amino-acid sequence, 260 residues long: Snake venom serine protease KN14 (260 aa).

The first 18 residues, 1–18 (MVLIRVLANLLILQLSYA), serve as a signal peptide directing secretion. Positions 19–24 (QKSSEL) are excised as a propeptide. The Peptidase S1 domain maps to 25–251 (VIGGDECNIN…HLDWIQSIIA (227 aa)). Disulfide bonds link cysteine 31–cysteine 165, cysteine 100–cysteine 258, cysteine 144–cysteine 212, cysteine 176–cysteine 191, and cysteine 202–cysteine 227. Histidine 67 acts as the Charge relay system in catalysis. N-linked (GlcNAc...) asparagine glycosylation is present at asparagine 105. Aspartate 112 (charge relay system) is an active-site residue. Asparagine 172 carries an N-linked (GlcNAc...) asparagine glycan. Catalysis depends on serine 206, which acts as the Charge relay system. N-linked (GlcNAc...) asparagine glycans are attached at residues asparagine 213 and asparagine 255.

Belongs to the peptidase S1 family. Snake venom subfamily. In terms of assembly, monomer. In terms of tissue distribution, expressed by the venom gland.

It is found in the secreted. In terms of biological role, snake venom serine protease that may act in the hemostasis system of the prey. The polypeptide is Snake venom serine protease KN14 (Trimeresurus stejnegeri (Chinese green tree viper)).